A 617-amino-acid chain; its full sequence is Proline--tRNA ligase (617 aa).

Belongs to the class-II aminoacyl-tRNA synthetase family. ProS type 1 subfamily. In terms of assembly, homodimer.

It is found in the cytoplasm. The catalysed reaction is tRNA(Pro) + L-proline + ATP = L-prolyl-tRNA(Pro) + AMP + diphosphate. Its function is as follows. Catalyzes the attachment of proline to tRNA(Pro) in a two-step reaction: proline is first activated by ATP to form Pro-AMP and then transferred to the acceptor end of tRNA(Pro). As ProRS can inadvertently accommodate and process non-cognate amino acids such as alanine and cysteine, to avoid such errors it has two additional distinct editing activities against alanine. One activity is designated as 'pretransfer' editing and involves the tRNA(Pro)-independent hydrolysis of activated Ala-AMP. The other activity is designated 'posttransfer' editing and involves deacylation of mischarged Ala-tRNA(Pro). The misacylated Cys-tRNA(Pro) is not edited by ProRS. The polypeptide is Proline--tRNA ligase (Streptococcus pneumoniae (strain Hungary19A-6)).